Reading from the N-terminus, the 468-residue chain is Kynureninase 2 (468 aa).

Residues L134, T135, 162 to 165 (FPSD), D247, H250, and Y272 each bind pyridoxal 5'-phosphate. K273 carries the N6-(pyridoxal phosphate)lysine modification. 2 residues coordinate pyridoxal 5'-phosphate: W312 and N340.

It belongs to the kynureninase family. In terms of assembly, homodimer. Requires pyridoxal 5'-phosphate as cofactor.

The protein resides in the cytoplasm. The catalysed reaction is L-kynurenine + H2O = anthranilate + L-alanine + H(+). The enzyme catalyses 3-hydroxy-L-kynurenine + H2O = 3-hydroxyanthranilate + L-alanine + H(+). It participates in amino-acid degradation; L-kynurenine degradation; L-alanine and anthranilate from L-kynurenine: step 1/1. Its pathway is cofactor biosynthesis; NAD(+) biosynthesis; quinolinate from L-kynurenine: step 2/3. Functionally, catalyzes the cleavage of L-kynurenine (L-Kyn) and L-3-hydroxykynurenine (L-3OHKyn) into anthranilic acid (AA) and 3-hydroxyanthranilic acid (3-OHAA), respectively. This Aspergillus oryzae (strain ATCC 42149 / RIB 40) (Yellow koji mold) protein is Kynureninase 2 (bna5-2).